A 160-amino-acid polypeptide reads, in one-letter code: Transcriptional repressor NrdR (160 aa).

Over residues 1–11 the composition is skewed to polar residues; the sequence is MRCPNCNSLDT. The tract at residues 1-20 is disordered; that stretch reads MRCPNCNSLDTQVKDSRPTE. The segment at 3 to 34 is a zinc-finger region; it reads CPNCNSLDTQVKDSRPTEDSSVIRRRRVCIAC. The ATP-cone domain occupies 49 to 139; that stretch reads LTVIKRNGRR…VYRNFREAKD (91 aa).

Belongs to the NrdR family. Zn(2+) is required as a cofactor.

Negatively regulates transcription of bacterial ribonucleotide reductase nrd genes and operons by binding to NrdR-boxes. This is Transcriptional repressor NrdR from Rhodopseudomonas palustris (strain BisB5).